Reading from the N-terminus, the 272-residue chain is Cell division protein FtsQ (272 aa).

Over 1 to 43 the chain is Cytoplasmic; that stretch reads MEYNPPNTRERIAARRQRLRQPSSEPAIPGWRRRFIDGLQSGR. A helical transmembrane segment spans residues 44–64; that stretch reads IVSGAVFVVSCLALFYVLFSS. Topologically, residues 65–272 are extracellular; that stretch reads QFRVQTVEVV…FYQNRTDGRS (208 aa). The 68-residue stretch at 66-133 folds into the POTRA domain; that stretch reads FRVQTVEVVG…DRARIVIVER (68 aa).

It belongs to the FtsQ/DivIB family. FtsQ subfamily.

The protein localises to the cell membrane. In terms of biological role, essential cell division protein. This is Cell division protein FtsQ from Chloroflexus aggregans (strain MD-66 / DSM 9485).